Here is a 32-residue protein sequence, read N- to C-terminus: Protamine-2 (32 aa).

Positions 1–32 (PRRRRSSSRPVRRRRARRVSRRRRRRGGRRRR) are disordered.

In terms of tissue distribution, testis.

The protein resides in the nucleus. The protein localises to the chromosome. In terms of biological role, protamines substitute for histones in the chromatin of sperm during the haploid phase of spermatogenesis. They compact sperm DNA into a highly condensed, stable and inactive complex. This chain is Protamine-2, found in Oncorhynchus mykiss (Rainbow trout).